Reading from the N-terminus, the 369-residue chain is Cyclin-dependent kinase 5 activator 2 (369 aa).

A compositionally biased stretch (polar residues) spans 1–11 (MGTVLSLSPAS). Disordered regions lie at residues 1 to 55 (MGTV…SRLK), 72 to 176 (ASAK…SPRR), and 330 to 369 (EAAASTGGPPSGSSASTTSSSSARDSCATGAKHWTMNLDR). Glycine 2 carries the N-myristoyl glycine lipid modification. Residues 74 to 84 (AKKKKGSKKVT) show a composition bias toward basic residues. Threonine 84 is subject to Phosphothreonine. The span at 99-112 (RNRENLLRKGRDGP) shows a compositional bias: basic and acidic residues. Over residues 122–144 (AVPVPTVPTTAATCEPPSGGSAA) the composition is skewed to low complexity. A compositionally biased stretch (pro residues) spans 145 to 171 (APPPGSGGGKPPPPPPPAPQAAPPAPG). Residues 331–352 (AAASTGGPPSGSSASTTSSSSA) are compositionally biased toward low complexity.

Belongs to the cyclin-dependent kinase 5 activator family. As to quaternary structure, heterodimer of a catalytic subunit and a regulatory subunit. Myristoylated. The Gly-2-Ala mutant is absent of the cell periphery, suggesting that a proper myristoylation signal is essential for the proper distribution of CDK5R2 (p39).

It is found in the cell membrane. Functionally, activator of CDK5/TPKII. The polypeptide is Cyclin-dependent kinase 5 activator 2 (Cdk5r2) (Mus musculus (Mouse)).